We begin with the raw amino-acid sequence, 132 residues long: Myelin P2 protein (132 aa).

Position 2 is an N-acetylserine (serine 2). Residues arginine 107 and 127 to 129 each bind (9Z)-octadecenoate; that span reads RIY. Residues arginine 107 and 127–129 contribute to the hexadecanoate site; that span reads RIY.

Belongs to the calycin superfamily. Fatty-acid binding protein (FABP) family. Monomer.

It is found in the cytoplasm. Its function is as follows. May play a role in lipid transport protein in Schwann cells. May bind cholesterol. This chain is Myelin P2 protein (Pmp2), found in Mus musculus (Mouse).